Here is a 212-residue protein sequence, read N- to C-terminus: Protein-L-isoaspartate O-methyltransferase (212 aa).

Serine 60 is an active-site residue.

Belongs to the methyltransferase superfamily. L-isoaspartyl/D-aspartyl protein methyltransferase family.

Its subcellular location is the cytoplasm. It catalyses the reaction [protein]-L-isoaspartate + S-adenosyl-L-methionine = [protein]-L-isoaspartate alpha-methyl ester + S-adenosyl-L-homocysteine. Functionally, catalyzes the methyl esterification of L-isoaspartyl residues in peptides and proteins that result from spontaneous decomposition of normal L-aspartyl and L-asparaginyl residues. It plays a role in the repair and/or degradation of damaged proteins. This Methanococcus maripaludis (strain C5 / ATCC BAA-1333) protein is Protein-L-isoaspartate O-methyltransferase.